The primary structure comprises 252 residues: Trans-aconitate 2-methyltransferase (252 aa).

This sequence belongs to the methyltransferase superfamily. Tam family.

The protein resides in the cytoplasm. It catalyses the reaction trans-aconitate + S-adenosyl-L-methionine = (E)-3-(methoxycarbonyl)pent-2-enedioate + S-adenosyl-L-homocysteine. Functionally, catalyzes the S-adenosylmethionine monomethyl esterification of trans-aconitate. This Escherichia coli O17:K52:H18 (strain UMN026 / ExPEC) protein is Trans-aconitate 2-methyltransferase.